The primary structure comprises 146 residues: Acireductone dioxygenase (146 aa).

Residues His-71, His-73, Glu-77, and His-116 each contribute to the Fe(2+) site. Residues His-71, His-73, Glu-77, and His-116 each coordinate Ni(2+).

This sequence belongs to the acireductone dioxygenase (ARD) family. It depends on Fe(2+) as a cofactor. Requires Ni(2+) as cofactor.

It is found in the cytoplasm. Its subcellular location is the nucleus. The enzyme catalyses 1,2-dihydroxy-5-(methylsulfanyl)pent-1-en-3-one + O2 = 4-methylsulfanyl-2-oxobutanoate + formate + 2 H(+). It carries out the reaction 1,2-dihydroxy-5-(methylsulfanyl)pent-1-en-3-one + O2 = 3-(methylsulfanyl)propanoate + CO + formate + 2 H(+). The protein operates within amino-acid biosynthesis; L-methionine biosynthesis via salvage pathway; L-methionine from S-methyl-5-thio-alpha-D-ribose 1-phosphate: step 5/6. Functionally, catalyzes 2 different reactions between oxygen and the acireductone 1,2-dihydroxy-3-keto-5-methylthiopentene (DHK-MTPene) depending upon the metal bound in the active site. Fe-containing acireductone dioxygenase (Fe-ARD) produces formate and 2-keto-4-methylthiobutyrate (KMTB), the alpha-ketoacid precursor of methionine in the methionine recycle pathway. Ni-containing acireductone dioxygenase (Ni-ARD) produces methylthiopropionate, carbon monoxide and formate, and does not lie on the methionine recycle pathway. This chain is Acireductone dioxygenase, found in Heterostelium pallidum (strain ATCC 26659 / Pp 5 / PN500) (Cellular slime mold).